Consider the following 937-residue polypeptide: Putative leucine-rich repeat receptor-like serine/threonine-protein kinase At3g53590 (937 aa).

The N-terminal stretch at 1-20 (MIPPNINVLIRSICINLVTS) is a signal peptide. The Extracellular segment spans residues 21-547 (LPLNFAYIFI…LLAQTSGIRT (527 aa)). 4 N-linked (GlcNAc...) asparagine glycosylation sites follow: N50, N63, N90, and N114. 8 LRR repeats span residues 102–126 (LLYL…IGRI), 127–150 (SSLK…LGNL), 152–173 (NLNR…SFGN), 174–198 (LRSI…LSKL), 200–222 (KLVH…LAQL), 223–249 (PSLT…HFSR), 251–270 (VKLS…LSRI), and 271–294 (ENLS…KLSD). N162, N184, and N210 each carry an N-linked (GlcNAc...) asparagine glycan. N-linked (GlcNAc...) asparagine glycans are attached at residues N272 and N295. LRR repeat units lie at residues 296 to 316 (MTTI…SFSD), 317 to 341 (LNSL…IWQD), and 343 to 360 (SFEN…NFSD). Residues N327, N357, N370, N413, N499, and N516 are each glycosylated (N-linked (GlcNAc...) asparagine). Residues 548–568 (IVWMMIVAGSVVAATVLSVTA) form a helical membrane-spanning segment. Over 569 to 937 (TLLYVRKRRE…SGFFHAVKPR (369 aa)) the chain is Cytoplasmic. Residues 614–886 (FDSSTLIGRG…SKVVKELEGI (273 aa)) enclose the Protein kinase domain. ATP is bound by residues 620–628 (IGRGSYGKV) and K642. D738 (proton acceptor) is an active-site residue.

This sequence belongs to the protein kinase superfamily. Ser/Thr protein kinase family.

The protein localises to the cell membrane. The catalysed reaction is L-seryl-[protein] + ATP = O-phospho-L-seryl-[protein] + ADP + H(+). It catalyses the reaction L-threonyl-[protein] + ATP = O-phospho-L-threonyl-[protein] + ADP + H(+). This Arabidopsis thaliana (Mouse-ear cress) protein is Putative leucine-rich repeat receptor-like serine/threonine-protein kinase At3g53590.